A 371-amino-acid polypeptide reads, in one-letter code: Heterodimeric geranylgeranyl pyrophosphate synthase large subunit 1, chloroplastic (371 aa).

The N-terminal 51 residues, 1-51 (MASVTLGSWIVVHHHNHHHPSSILTKSRSRSCPITLTKPISFRSKRTVSSS), are a transit peptide targeting the chloroplast. The residue at position 52 (Ser52) is an N-acetylserine. Isopentenyl diphosphate is bound by residues Lys116, Arg119, and His148. Mg(2+) is bound by residues Asp155 and Asp161. Residue Arg166 coordinates dimethylallyl diphosphate. Position 167 (Arg167) interacts with isopentenyl diphosphate. Dimethylallyl diphosphate is bound by residues Lys256, Thr257, Gln294, Lys311, and Lys321.

Belongs to the FPP/GGPP synthase family. In terms of assembly, forms homodimers. Part of a heterodimeric geranyl(geranyl)diphosphate synthase. Interacts with GGR. Mg(2+) serves as cofactor. Expressed ubiquitously.

It is found in the plastid. The protein localises to the chloroplast. The protein resides in the cytoplasm. It carries out the reaction isopentenyl diphosphate + dimethylallyl diphosphate = (2E)-geranyl diphosphate + diphosphate. The catalysed reaction is isopentenyl diphosphate + (2E)-geranyl diphosphate = (2E,6E)-farnesyl diphosphate + diphosphate. The enzyme catalyses isopentenyl diphosphate + (2E,6E)-farnesyl diphosphate = (2E,6E,10E)-geranylgeranyl diphosphate + diphosphate. It functions in the pathway isoprenoid biosynthesis; farnesyl diphosphate biosynthesis; farnesyl diphosphate from geranyl diphosphate and isopentenyl diphosphate: step 1/1. Its pathway is isoprenoid biosynthesis; geranyl diphosphate biosynthesis; geranyl diphosphate from dimethylallyl diphosphate and isopentenyl diphosphate: step 1/1. The protein operates within isoprenoid biosynthesis; geranylgeranyl diphosphate biosynthesis; geranylgeranyl diphosphate from farnesyl diphosphate and isopentenyl diphosphate: step 1/1. Functionally, heterodimeric geranyl(geranyl)-diphosphate (GPP) synthase large subunit. In vitro, the large subunit catalyzes mainly the trans-addition of the three molecules of IPP onto DMAPP to form geranylgeranyl pyrophosphate while the small subunit alone is inactive. Upon association of the two subunits, the product profile changes and the production of gerany-diphosphate is strongly increased. The protein is Heterodimeric geranylgeranyl pyrophosphate synthase large subunit 1, chloroplastic (GGPPS1) of Arabidopsis thaliana (Mouse-ear cress).